The following is a 349-amino-acid chain: L-lactate dehydrogenase (349 aa).

The tract at residues 199–219 (APEGSIIGADGNPTTDASTMF) is disordered.

Belongs to the LDH2/MDH2 oxidoreductase family.

It localises to the cytoplasm. It carries out the reaction (S)-lactate + NAD(+) = pyruvate + NADH + H(+). It functions in the pathway fermentation; pyruvate fermentation to lactate; (S)-lactate from pyruvate: step 1/1. The chain is L-lactate dehydrogenase (ldh) from Cupriavidus necator (strain ATCC 17699 / DSM 428 / KCTC 22496 / NCIMB 10442 / H16 / Stanier 337) (Ralstonia eutropha).